The sequence spans 480 residues: Protein nucleotidyltransferase YdiU (480 aa).

ATP contacts are provided by Gly86, Gly88, Arg89, Lys109, Asp121, Gly122, Arg172, and Arg179. Asp248 acts as the Proton acceptor in catalysis. Residues Asn249 and Asp258 each coordinate Mg(2+). Asp258 contributes to the ATP binding site.

The protein belongs to the SELO family. Mg(2+) is required as a cofactor. Mn(2+) serves as cofactor.

The enzyme catalyses L-seryl-[protein] + ATP = 3-O-(5'-adenylyl)-L-seryl-[protein] + diphosphate. It catalyses the reaction L-threonyl-[protein] + ATP = 3-O-(5'-adenylyl)-L-threonyl-[protein] + diphosphate. It carries out the reaction L-tyrosyl-[protein] + ATP = O-(5'-adenylyl)-L-tyrosyl-[protein] + diphosphate. The catalysed reaction is L-histidyl-[protein] + UTP = N(tele)-(5'-uridylyl)-L-histidyl-[protein] + diphosphate. The enzyme catalyses L-seryl-[protein] + UTP = O-(5'-uridylyl)-L-seryl-[protein] + diphosphate. It catalyses the reaction L-tyrosyl-[protein] + UTP = O-(5'-uridylyl)-L-tyrosyl-[protein] + diphosphate. In terms of biological role, nucleotidyltransferase involved in the post-translational modification of proteins. It can catalyze the addition of adenosine monophosphate (AMP) or uridine monophosphate (UMP) to a protein, resulting in modifications known as AMPylation and UMPylation. The chain is Protein nucleotidyltransferase YdiU from Salmonella enteritidis PT4 (strain P125109).